The sequence spans 141 residues: Hemoglobin subunit alpha (141 aa).

The Globin domain maps to 1–141 (VLSSKDKTNV…VSTVLTSKYR (141 aa)). At S3 the chain carries Phosphoserine. K7 carries the N6-succinyllysine modification. A Phosphothreonine modification is found at T8. K11 carries the N6-succinyllysine modification. Residue K16 is modified to N6-acetyllysine; alternate. Residue K16 is modified to N6-succinyllysine; alternate. A Phosphotyrosine modification is found at Y24. K40 bears the N6-succinyllysine mark. A Phosphoserine modification is found at S49. Position 58 (H58) interacts with O2. H87 lines the heme b pocket. S102 is subject to Phosphoserine. Position 108 is a phosphothreonine (T108). S124 carries the post-translational modification Phosphoserine. 2 positions are modified to phosphothreonine: T134 and T137. S138 carries the phosphoserine modification.

This sequence belongs to the globin family. Heterotetramer of two alpha chains and two beta chains. In terms of tissue distribution, red blood cells.

Involved in oxygen transport from the lung to the various peripheral tissues. Its function is as follows. Hemopressin acts as an antagonist peptide of the cannabinoid receptor CNR1. Hemopressin-binding efficiently blocks cannabinoid receptor CNR1 and subsequent signaling. The chain is Hemoglobin subunit alpha (HBA) from Camelus dromedarius (Dromedary).